Consider the following 466-residue polypeptide: Carboxy-terminal processing protease CtpA (466 aa).

The first 36 residues, 1 to 36 (MKRQLKLFFIVLITAVVASALTLFITGNSSILGQKS), serve as a signal peptide directing secretion. A PDZ domain is found at 96-174 (DETISASFEG…TKVKLELNRA (79 aa)). Catalysis depends on charge relay system residues serine 297, glutamate 308, and lysine 322.

Belongs to the peptidase S41A family.

The enzyme catalyses The enzyme shows specific recognition of a C-terminal tripeptide, Xaa-Yaa-Zaa, in which Xaa is preferably Ala or Leu, Yaa is preferably Ala or Tyr, and Zaa is preferably Ala, but then cleaves at a variable distance from the C-terminus. A typical cleavage is -Ala-Ala-|-Arg-Ala-Ala-Lys-Glu-Asn-Tyr-Ala-Leu-Ala-Ala.. The sequence is that of Carboxy-terminal processing protease CtpA (ctpA) from Bacillus subtilis (strain 168).